We begin with the raw amino-acid sequence, 744 residues long: NAD(P)H-quinone oxidoreductase subunit 5, chloroplastic (744 aa).

16 helical membrane passes run 9–29, 40–60, 89–109, 125–145, 147–167, 185–205, 219–239, 258–278, 280–300, 327–347, 354–374, 396–416, 425–445, 552–572, 612–632, and 724–744; these read WIIP…LLFF, WVFP…DLSI, IDSL…LVLI, FTYL…SNLI, VYIF…FWFT, GDFG…SLEF, NEVN…GSVA, TPIS…FLVA, LLPL…IGII, LGYM…FHLI, ALLF…VGYS, NAFL…CFWS, WLYS…TAFY, LFSM…GISF, FSVS…KPVF, and ISSY…SIFI.

This sequence belongs to the complex I subunit 5 family. In terms of assembly, NDH is composed of at least 16 different subunits, 5 of which are encoded in the nucleus.

The protein localises to the plastid. It is found in the chloroplast thylakoid membrane. It catalyses the reaction a plastoquinone + NADH + (n+1) H(+)(in) = a plastoquinol + NAD(+) + n H(+)(out). The catalysed reaction is a plastoquinone + NADPH + (n+1) H(+)(in) = a plastoquinol + NADP(+) + n H(+)(out). NDH shuttles electrons from NAD(P)H:plastoquinone, via FMN and iron-sulfur (Fe-S) centers, to quinones in the photosynthetic chain and possibly in a chloroplast respiratory chain. The immediate electron acceptor for the enzyme in this species is believed to be plastoquinone. Couples the redox reaction to proton translocation, and thus conserves the redox energy in a proton gradient. This chain is NAD(P)H-quinone oxidoreductase subunit 5, chloroplastic (ndhF), found in Cicer arietinum (Chickpea).